The following is a 528-amino-acid chain: Light-independent protochlorophyllide reductase subunit B (528 aa).

Asp-36 lines the [4Fe-4S] cluster pocket. Catalysis depends on Asp-274, which acts as the Proton donor. Residue 409–410 (GL) participates in substrate binding. The interval 429-471 (GPSHHGGHAPKPMHDAPAASAAAGAEASMAEETAAPSQDAPAA) is disordered. The segment covering 444-465 (APAASAAAGAEASMAEETAAPS) has biased composition (low complexity).

The protein belongs to the ChlB/BchB/BchZ family. In terms of assembly, protochlorophyllide reductase is composed of three subunits; BchL, BchN and BchB. Forms a heterotetramer of two BchB and two BchN subunits. Requires [4Fe-4S] cluster as cofactor.

The enzyme catalyses chlorophyllide a + oxidized 2[4Fe-4S]-[ferredoxin] + 2 ADP + 2 phosphate = protochlorophyllide a + reduced 2[4Fe-4S]-[ferredoxin] + 2 ATP + 2 H2O. It functions in the pathway porphyrin-containing compound metabolism; bacteriochlorophyll biosynthesis (light-independent). In terms of biological role, component of the dark-operative protochlorophyllide reductase (DPOR) that uses Mg-ATP and reduced ferredoxin to reduce ring D of protochlorophyllide (Pchlide) to form chlorophyllide a (Chlide). This reaction is light-independent. The NB-protein (BchN-BchB) is the catalytic component of the complex. In Dinoroseobacter shibae (strain DSM 16493 / NCIMB 14021 / DFL 12), this protein is Light-independent protochlorophyllide reductase subunit B.